The sequence spans 107 residues: UPF0145 protein PM1668 (107 aa).

Belongs to the UPF0145 family.

The sequence is that of UPF0145 protein PM1668 from Pasteurella multocida (strain Pm70).